The chain runs to 458 residues: Monomethylamine methyltransferase MtmB2 (458 aa).

Residue Pyl-202 is a non-standard amino acid, pyrrolysine.

Belongs to the monomethylamine methyltransferase family. In terms of assembly, can form a complex with MtmC.

The catalysed reaction is Co(I)-[methylamine-specific corrinoid protein] + methylamine + H(+) = methyl-Co(III)-[methylamine-specific corrinoid protein] + NH4(+). Its pathway is one-carbon metabolism; methanogenesis from methylamine. Catalyzes the transfer of the methyl group from monomethylamine to the corrinoid cofactor of MtmC. This is Monomethylamine methyltransferase MtmB2 (mtmB2) from Methanosarcina acetivorans (strain ATCC 35395 / DSM 2834 / JCM 12185 / C2A).